The primary structure comprises 577 residues: Type I restriction enzyme MjaVII methylase subunit (577 aa).

Residues 251-256, 281-283, glutamate 306, and 335-336 each bind S-adenosyl-L-methionine; these read EVYTPV, SGT, and DS.

The protein belongs to the N4/N6-methyltransferase family. In terms of assembly, the type I restriction/modification system is composed of three polypeptides R, M and S.

It carries out the reaction a 2'-deoxyadenosine in DNA + S-adenosyl-L-methionine = an N(6)-methyl-2'-deoxyadenosine in DNA + S-adenosyl-L-homocysteine + H(+). In terms of biological role, the subtype gamma methyltransferase (M) subunit of a type I restriction enzyme. The M and S subunits together form a methyltransferase (MTase) that methylates A-3 on the top and bottom strands of the sequence 5'-CAAN(7)TGG-3'. In the presence of the R subunit the complex can also act as an endonuclease, binding to the same target sequence but cutting the DNA some distance from this site. Whether the DNA is cut or modified depends on the methylation state of the target sequence. When the target site is unmodified, the DNA is cut. When the target site is hemimethylated, the complex acts as a maintenance MTase modifying the DNA so that both strands become methylated. After locating a non-methylated recognition site, the enzyme complex serves as a molecular motor that translocates DNA in an ATP-dependent manner until a collision occurs that triggers cleavage. This chain is Type I restriction enzyme MjaVII methylase subunit, found in Methanocaldococcus jannaschii (strain ATCC 43067 / DSM 2661 / JAL-1 / JCM 10045 / NBRC 100440) (Methanococcus jannaschii).